The sequence spans 533 residues: Glucose-6-phosphate isomerase (533 aa).

Glu322 (proton donor) is an active-site residue. Residues His351 and Lys455 contribute to the active site.

This sequence belongs to the GPI family.

It is found in the cytoplasm. The catalysed reaction is alpha-D-glucose 6-phosphate = beta-D-fructose 6-phosphate. Its pathway is carbohydrate biosynthesis; gluconeogenesis. It functions in the pathway carbohydrate degradation; glycolysis; D-glyceraldehyde 3-phosphate and glycerone phosphate from D-glucose: step 2/4. In terms of biological role, catalyzes the reversible isomerization of glucose-6-phosphate to fructose-6-phosphate. In Desulfitobacterium hafniense (strain Y51), this protein is Glucose-6-phosphate isomerase.